A 475-amino-acid polypeptide reads, in one-letter code: Squamosa promoter-binding-like protein 12 (475 aa).

The disordered stretch occupies residues 49 to 73; the sequence is NHGSTNSSGGTFTSSSELANGSSKS. Residues 51 to 73 show a composition bias toward low complexity; it reads GSTNSSGGTFTSSSELANGSSKS. The SBP-type zinc finger occupies 177–254; that stretch reads SSYCQVEGCK…SDHNARRRKP (78 aa). C180, C185, C202, H205, C221, C224, H228, and C240 together coordinate Zn(2+). The short motif at 237–253 is the Bipartite nuclear localization signal element; that stretch reads KKSCRRRLSDHNARRRK. A disordered region spans residues 437–475; that stretch reads GGGGFWQDGDDPPPLDHASQAQAFMHPGNGSSSGYGHLH. Over residues 465-475 the composition is skewed to polar residues; sequence NGSSSGYGHLH.

As to expression, expressed in young panicles.

It localises to the nucleus. Trans-acting factor that binds specifically to the consensus nucleotide sequence 5'-TNCGTACAA-3'. May be involved in panicle development. This chain is Squamosa promoter-binding-like protein 12 (SPL12), found in Oryza sativa subsp. japonica (Rice).